The sequence spans 366 residues: MNLLETVEQDTMPTHYKQMTQVEMIARVTEIKAQLGENLFIPCHHYQKDEVVPFADAIGDSLQLAQIAAQNKKAKHIVFCGVHFMAETADMLTTSEQIVTLPDMRAGCSMADMADIHQLTNAWPKLQTLFGDTILPVTYINSTAAIKSFVGEHGGTTVTSSNATKIVSWALEQKERIFFLPDQHLGRNTAFELGIPLEHMAIWNPIKNELEYEGNLDDCKVILWKGYCSVHQHFTVKNIENIRKNHPNMRIIVHPECTHEVVSLADDSGSTKKIVTEINNAAPGTEWAVGTEANLVGRIIQENPDKKIVSLNPFMCPCMTMNRIDLPHLLWTLEAIQNGEKRNQIKVDEQTTKFALKALERMLQLS.

Iminosuccinate contacts are provided by His44 and Ser61. Position 108 (Cys108) interacts with [4Fe-4S] cluster. Residues 139-141 (YIN) and Ser160 contribute to the iminosuccinate site. Cys228 contacts [4Fe-4S] cluster. Residues 254-256 (HPE) and Thr271 each bind iminosuccinate. Cys318 contacts [4Fe-4S] cluster.

This sequence belongs to the quinolinate synthase family. Type 3 subfamily. The cofactor is [4Fe-4S] cluster.

Its subcellular location is the cytoplasm. The enzyme catalyses iminosuccinate + dihydroxyacetone phosphate = quinolinate + phosphate + 2 H2O + H(+). Its pathway is cofactor biosynthesis; NAD(+) biosynthesis; quinolinate from iminoaspartate: step 1/1. In terms of biological role, catalyzes the condensation of iminoaspartate with dihydroxyacetone phosphate to form quinolinate. The protein is Quinolinate synthase of Listeria monocytogenes serovar 1/2a (strain ATCC BAA-679 / EGD-e).